A 134-amino-acid polypeptide reads, in one-letter code: Profilin (134 aa).

Belongs to the profilin family. In terms of assembly, occurs in many kinds of cells as a complex with monomeric actin in a 1:1 ratio.

Its subcellular location is the cytoplasm. The protein localises to the cytoskeleton. Functionally, binds to actin and affects the structure of the cytoskeleton. At high concentrations, profilin prevents the polymerization of actin, whereas it enhances it at low concentrations. By binding to PIP2, it inhibits the formation of IP3 and DG. The protein is Profilin of Daucus carota (Wild carrot).